The chain runs to 62 residues: Keratin-associated protein 6-2 (62 aa).

Belongs to the KRTAP type 6 family. As to quaternary structure, interacts with hair keratins.

In the hair cortex, hair keratin intermediate filaments are embedded in an interfilamentous matrix, consisting of hair keratin-associated proteins (KRTAP), which are essential for the formation of a rigid and resistant hair shaft through their extensive disulfide bond cross-linking with abundant cysteine residues of hair keratins. The matrix proteins include the high-sulfur and high-glycine-tyrosine keratins. The polypeptide is Keratin-associated protein 6-2 (KRTAP6-2) (Homo sapiens (Human)).